A 235-amino-acid chain; its full sequence is Adenosine 5'-phosphosulfate reductase (235 aa).

Residues Cys121, Cys122, Cys204, and Cys207 each contribute to the [4Fe-4S] cluster site. Residue Cys230 is the Nucleophile; cysteine thiosulfonate intermediate of the active site.

Belongs to the PAPS reductase family. CysH subfamily. It depends on [4Fe-4S] cluster as a cofactor.

Its subcellular location is the cytoplasm. It carries out the reaction [thioredoxin]-disulfide + sulfite + AMP + 2 H(+) = adenosine 5'-phosphosulfate + [thioredoxin]-dithiol. It functions in the pathway sulfur metabolism; hydrogen sulfide biosynthesis; sulfite from sulfate. Its function is as follows. Catalyzes the formation of sulfite from adenosine 5'-phosphosulfate (APS) using thioredoxin as an electron donor. The polypeptide is Adenosine 5'-phosphosulfate reductase (Anoxybacillus flavithermus (strain DSM 21510 / WK1)).